The following is a 114-amino-acid chain: MDKMLEISEEAITRYFTTLSQFGYKKYSDVDKIIVLFFMEEMLAGEMSYYVTQDDYRNIVNALYCLAGSTCMIDFPMFESYDTLVHSNNRTFVPRITEDSILRSTEDDNFRVEA.

Heterotrimer with THA. The heterotrimers further assemble as 12 docking hubs that anchor the trimeric tail fibers.

Its subcellular location is the virion. Forms the tail hub together with tail hub protein A (THA). This Bacteroides intestinalis (Bacteroides phage PhiCrAss001) protein is Tail hub protein B.